Reading from the N-terminus, the 241-residue chain is Methylthioribulose-1-phosphate dehydratase (241 aa).

Residues 1–17 are compositionally biased toward polar residues; the sequence is MAKQVENNNNDHLVQST. The disordered stretch occupies residues 1 to 21; the sequence is MAKQVENNNNDHLVQSTDPEH. Cysteine 100 contributes to the substrate binding site. The Zn(2+) site is built by histidine 117 and histidine 119. Catalysis depends on glutamate 146, which acts as the Proton donor/acceptor. Residue histidine 202 coordinates Zn(2+).

It belongs to the aldolase class II family. MtnB subfamily. Zn(2+) is required as a cofactor.

It is found in the cytoplasm. The enzyme catalyses 5-(methylsulfanyl)-D-ribulose 1-phosphate = 5-methylsulfanyl-2,3-dioxopentyl phosphate + H2O. It participates in amino-acid biosynthesis; L-methionine biosynthesis via salvage pathway; L-methionine from S-methyl-5-thio-alpha-D-ribose 1-phosphate: step 2/6. In terms of biological role, catalyzes the dehydration of methylthioribulose-1-phosphate (MTRu-1-P) into 2,3-diketo-5-methylthiopentyl-1-phosphate (DK-MTP-1-P). The sequence is that of Methylthioribulose-1-phosphate dehydratase from Aspergillus flavus (strain ATCC 200026 / FGSC A1120 / IAM 13836 / NRRL 3357 / JCM 12722 / SRRC 167).